We begin with the raw amino-acid sequence, 137 residues long: Phospholipase A2 homolog PLA2-03 (137 aa).

An N-terminal signal peptide occupies residues 1–16 (MRTLWIVAVLLVGVEG). 7 disulfides stabilise this stretch: Cys42–Cys131, Cys44–Cys60, Cys59–Cys111, Cys65–Cys137, Cys66–Cys104, Cys73–Cys97, and Cys91–Cys102. Residues 121–133 (KKYKIFPKFLCKK) are important for membrane-damaging activities in eukaryotes and bacteria; heparin-binding.

This sequence belongs to the phospholipase A2 family. Group II subfamily. K49 sub-subfamily. Expressed by the venom gland.

It localises to the secreted. Its function is as follows. Snake venom phospholipase A2 homolog that lacks enzymatic activity. Is myotoxic and displays edema-inducing activities in mouse paw. A model of myotoxic mechanism has been proposed: an apo Lys49-PLA2 is activated by the entrance of a hydrophobic molecule (e.g. fatty acid) at the hydrophobic channel of the protein leading to a reorientation of a monomer. This reorientation causes a transition between 'inactive' to 'active' states, causing alignment of C-terminal and membrane-docking sites (MDoS) side-by-side and putting the membrane-disruption sites (MDiS) in the same plane, exposed to solvent and in a symmetric position for both monomers. The MDoS region stabilizes the toxin on membrane by the interaction of charged residues with phospholipid head groups. Subsequently, the MDiS region destabilizes the membrane with penetration of hydrophobic residues. This insertion causes a disorganization of the membrane, allowing an uncontrolled influx of ions (i.e. calcium and sodium), and eventually triggering irreversible intracellular alterations and cell death. The chain is Phospholipase A2 homolog PLA2-03 from Ovophis okinavensis (Ryukyu Island pit viper).